A 235-amino-acid chain; its full sequence is Ribosomal RNA large subunit methyltransferase E (235 aa).

Residues G76, W78, D99, D115, and D139 each contribute to the S-adenosyl-L-methionine site. K179 functions as the Proton acceptor in the catalytic mechanism.

Belongs to the class I-like SAM-binding methyltransferase superfamily. RNA methyltransferase RlmE family.

It is found in the cytoplasm. The enzyme catalyses uridine(2552) in 23S rRNA + S-adenosyl-L-methionine = 2'-O-methyluridine(2552) in 23S rRNA + S-adenosyl-L-homocysteine + H(+). Functionally, specifically methylates the uridine in position 2552 of 23S rRNA at the 2'-O position of the ribose in the fully assembled 50S ribosomal subunit. This is Ribosomal RNA large subunit methyltransferase E from Rhodopseudomonas palustris (strain BisB5).